The primary structure comprises 442 residues: Chitinase-like protein Idgf4 (442 aa).

The N-terminal stretch at 1–21 (MKLYALFSLLVGSLAIGQISA) is a signal peptide. Residues 25 to 442 (HHLLCYYDGN…PILRQVKSKL (418 aa)) enclose the GH18 domain. A disulfide bridge links Cys-29 with Cys-56. Residue Asn-224 is glycosylated (N-linked (GlcNAc...) asparagine). The cysteines at positions 343 and 426 are disulfide-linked.

The protein belongs to the glycosyl hydrolase 18 family. IDGF subfamily. In terms of processing, glycosylated. Primarily expressed in yolk cells and fat body. In larvae, it is expressed in the imaginal ring, the salivary duct, large salivary gland cells and weakly expressed in imaginal disks. More strongly expressed than Idgf1 and Idgf3.

The protein localises to the secreted. Its function is as follows. Cooperates with insulin-like peptides to stimulate the proliferation, polarization and motility of imaginal disk cells. May act by stabilizing the binding of insulin-like peptides to its receptor through a simultaneous interaction with both molecules to form a multiprotein signaling complex. The chain is Chitinase-like protein Idgf4 (Idgf4) from Drosophila melanogaster (Fruit fly).